The following is an 850-amino-acid chain: Trimethylguanosine synthase (850 aa).

The interval 54 to 85 (NNAGDRVTEEEEDDHSSGTTESHSADEGDLDP) is disordered. Thr-61 bears the Phosphothreonine mark. A phosphoserine mark is found at Ser-92 and Ser-152. 3 disordered regions span residues 278-311 (DQNA…DNDH), 327-454 (EVEQ…GGIP), and 523-566 (ISQE…PENC). The span at 363–374 (TPKESDISENRS) shows a compositional bias: basic and acidic residues. Residues 375–390 (SDQPAQELQESSGTNT) are compositionally biased toward polar residues. Phosphoserine occurs at positions 405 and 431. Positions 424–435 (DIDENPDSEVDD) are enriched in acidic residues. Over residues 548–562 (SMEKTDGLMETRDPE) the composition is skewed to basic and acidic residues. Ser-571 is modified (phosphoserine). The disordered stretch occupies residues 595-628 (TEGVANSPRAEAEVEIKKKKKKKKKNKNKKINGL). Basic residues predominate over residues 611-624 (KKKKKKKKKNKNKK). Asp-713 is an S-adenosyl-L-methionine binding site.

It belongs to the methyltransferase superfamily. Trimethylguanosine synthase family. May form homooligomers. Interacts with CREBBP/CBP, EED/WAIT1, EP300/P300, NCOA6/PRIP, PPARBP/PBP and SMN. As to expression, a 55 kDa isoform is widely expressed while a 90 kDa isoform is detected exclusively in brain and testis (at protein level).

The protein localises to the cytoplasm. Its subcellular location is the nucleus. It localises to the cajal body. It is found in the nucleolus. It carries out the reaction a 5'-end (N(7)-methyl 5'-triphosphoguanosine)-ribonucleoside in snRNA + S-adenosyl-L-methionine = a 5'-end (N(2),N(7)-dimethyl 5'-triphosphoguanosine)-ribonucleoside in snRNA + S-adenosyl-L-homocysteine + H(+). It catalyses the reaction a 5'-end (N(7)-methyl 5'-triphosphoguanosine)-ribonucleoside in snoRNA + S-adenosyl-L-methionine = a 5'-end (N(2),N(7)-dimethyl 5'-triphosphoguanosine)-ribonucleoside in snoRNA + S-adenosyl-L-homocysteine + H(+). The catalysed reaction is a 5'-end (N(2),N(7)-dimethyl 5'-triphosphoguanosine)-ribonucleoside in snRNA + S-adenosyl-L-methionine = a 5'-end (N(2),N(2),N(7)-trimethyl 5'-triphosphoguanosine)-ribonucleoside in snRNA + S-adenosyl-L-homocysteine + H(+). The enzyme catalyses a 5'-end (N(2),N(7)-dimethyl 5'-triphosphoguanosine)-ribonucleoside in snoRNA + S-adenosyl-L-methionine = a 5'-end (N(2),N(2),N(7)-trimethyl 5'-triphosphoguanosine)-ribonucleoside in snoRNA + S-adenosyl-L-homocysteine + H(+). In terms of biological role, catalyzes the 2 serial methylation steps for the conversion of the 7-monomethylguanosine (m(7)G) caps of snRNAs and snoRNAs to a 2,2,7-trimethylguanosine (m(2,2,7)G) cap structure. The enzyme is specific for guanine, and N7 methylation must precede N2 methylation. Hypermethylation of the m7G cap of U snRNAs leads to their concentration in nuclear foci, their colocalization with coilin and the formation of canonical Cajal bodies (CBs). Plays a role in transcriptional regulation. This is Trimethylguanosine synthase from Rattus norvegicus (Rat).